The primary structure comprises 343 residues: MIKVAINGYGTIGKRVADAVAAQKDMKVIGVSKTRPNAEAFIAKQRGYPLYIADLSKKAAFEKAGLTVAGSVEDMCKAADVIVDATPGDIGVTNKPLYEKLGKKALWQGGEDHEVAGFSFNSSCNFKDAIGRQFIRVVSCNTTGLCRIINEVDKAFGVEHVHAIMVRRGSDPGEIKKGPIDAVVLDPVTVPSHHGPDVQTVLPHISITTMAMIVPTTMMHMHAVRITTKKEVNREKVIELIKNHPRLGLVKKSAGIKSTAELKEFAMDLGRQRADLYENCIFEDSIYANKNELCFFQAIHQEADVVVENVDAIRAMTSLANDGTASIKLTNDALHFVPIQNNH.

NAD(+)-binding positions include 11–12 (TI) and G110. 139–141 (SCN) contacts D-glyceraldehyde 3-phosphate. C140 functions as the Nucleophile in the catalytic mechanism. Residue R168 coordinates NAD(+). Residue 194–195 (HG) coordinates D-glyceraldehyde 3-phosphate. Q301 is a binding site for NAD(+).

This sequence belongs to the glyceraldehyde-3-phosphate dehydrogenase family. Homotetramer.

Its subcellular location is the cytoplasm. It catalyses the reaction D-glyceraldehyde 3-phosphate + phosphate + NADP(+) = (2R)-3-phospho-glyceroyl phosphate + NADPH + H(+). The enzyme catalyses D-glyceraldehyde 3-phosphate + phosphate + NAD(+) = (2R)-3-phospho-glyceroyl phosphate + NADH + H(+). Its pathway is carbohydrate degradation; glycolysis; pyruvate from D-glyceraldehyde 3-phosphate: step 1/5. The sequence is that of Glyceraldehyde-3-phosphate dehydrogenase from Methanoregula boonei (strain DSM 21154 / JCM 14090 / 6A8).